Here is a 368-residue protein sequence, read N- to C-terminus: tRNA-specific 2-thiouridylase MnmA (368 aa).

ATP contacts are provided by residues 12-19 (AMSGGVDS) and methionine 38. The active-site Nucleophile is the cysteine 110. Cysteine 110 and cysteine 207 are oxidised to a cystine. Glycine 134 contacts ATP. The segment at 157 to 159 (KDQ) is interaction with tRNA. Catalysis depends on cysteine 207, which acts as the Cysteine persulfide intermediate. An interaction with tRNA region spans residues 312-313 (RY).

It belongs to the MnmA/TRMU family.

It localises to the cytoplasm. It catalyses the reaction S-sulfanyl-L-cysteinyl-[protein] + uridine(34) in tRNA + AH2 + ATP = 2-thiouridine(34) in tRNA + L-cysteinyl-[protein] + A + AMP + diphosphate + H(+). Functionally, catalyzes the 2-thiolation of uridine at the wobble position (U34) of tRNA, leading to the formation of s(2)U34. This chain is tRNA-specific 2-thiouridylase MnmA, found in Geobacter metallireducens (strain ATCC 53774 / DSM 7210 / GS-15).